A 214-amino-acid chain; its full sequence is Glycerol-3-phosphate acyltransferase (214 aa).

Transmembrane regions (helical) follow at residues 4–24 (LIVA…IVSA), 52–72 (AAIL…WFVV), 82–102 (ETSV…PVFF), 118–138 (LAIN…VAFF), and 159–179 (FLFG…LLVW).

It belongs to the PlsY family. In terms of assembly, probably interacts with PlsX.

The protein localises to the cell inner membrane. The enzyme catalyses an acyl phosphate + sn-glycerol 3-phosphate = a 1-acyl-sn-glycero-3-phosphate + phosphate. It functions in the pathway lipid metabolism; phospholipid metabolism. Catalyzes the transfer of an acyl group from acyl-phosphate (acyl-PO(4)) to glycerol-3-phosphate (G3P) to form lysophosphatidic acid (LPA). This enzyme utilizes acyl-phosphate as fatty acyl donor, but not acyl-CoA or acyl-ACP. This Paraburkholderia phytofirmans (strain DSM 17436 / LMG 22146 / PsJN) (Burkholderia phytofirmans) protein is Glycerol-3-phosphate acyltransferase.